We begin with the raw amino-acid sequence, 187 residues long: Probable DNA endonuclease SmrA (187 aa).

Residues 88–169 enclose the Smr domain; that stretch reads LNLLRQPVEE…GSGACYVALR (82 aa).

Has DNA endonuclease activity. Binds DNA. This Escherichia coli (strain K12) protein is Probable DNA endonuclease SmrA (smrA).